The sequence spans 925 residues: Aspulvinone E synthetase melA (925 aa).

Positions 11-434 (ETAAARNGDG…GGRAKETIII (424 aa)) are adenylation (A) domain. The region spanning 564–644 (SPKNDFEKGL…ELAAALDNLY (81 aa)) is the Carrier domain. Position 601 is an O-(pantetheine 4'-phosphoryl)serine (Ser601). The thioesterase (TE) domain stretch occupies residues 663–923 (PLWLVHPGAG…KILRSALAER (261 aa)).

This sequence belongs to the ATP-dependent AMP-binding enzyme family.

Its subcellular location is the cytoplasm. Its function is as follows. Nonribosomal peptide synthase; part of the gene cluster that mediates the biosynthesis of Asp-melanin, a pigment that confers resistance against UV light and hampers phagocytosis by soil amoeba. The nonribosomal peptide synthase melA converts 4-hydroxyphenylpyruvate (4-HPPA) to aspulvinone E. The tyrosinase tyrP then performs hydroxylations of both aromatic moieties of aspulvinone E. The product of tyrP is highly unstable, and, due to the high reactivity of methides and ortho-diquinones, the polymeric Asp-melanin forms spontaneously. This is Aspulvinone E synthetase melA from Aspergillus terreus.